Consider the following 249-residue polypeptide: tRNA pseudouridine synthase A (249 aa).

The Nucleophile role is filled by aspartate 53. Tyrosine 111 is a binding site for substrate.

Belongs to the tRNA pseudouridine synthase TruA family. In terms of assembly, homodimer.

It carries out the reaction uridine(38/39/40) in tRNA = pseudouridine(38/39/40) in tRNA. Its function is as follows. Formation of pseudouridine at positions 38, 39 and 40 in the anticodon stem and loop of transfer RNAs. This chain is tRNA pseudouridine synthase A, found in Streptococcus pyogenes serotype M3 (strain ATCC BAA-595 / MGAS315).